Here is a 421-residue protein sequence, read N- to C-terminus: Serine--tRNA ligase (421 aa).

231 to 233 (TAE) contributes to the L-serine binding site. Position 262 to 264 (262 to 264 (RRE)) interacts with ATP. E285 is a binding site for L-serine. Residue 349 to 352 (EISS) participates in ATP binding. S384 is an L-serine binding site.

It belongs to the class-II aminoacyl-tRNA synthetase family. Type-1 seryl-tRNA synthetase subfamily. As to quaternary structure, homodimer. The tRNA molecule binds across the dimer.

Its subcellular location is the cytoplasm. The catalysed reaction is tRNA(Ser) + L-serine + ATP = L-seryl-tRNA(Ser) + AMP + diphosphate + H(+). It catalyses the reaction tRNA(Sec) + L-serine + ATP = L-seryl-tRNA(Sec) + AMP + diphosphate + H(+). It participates in aminoacyl-tRNA biosynthesis; selenocysteinyl-tRNA(Sec) biosynthesis; L-seryl-tRNA(Sec) from L-serine and tRNA(Sec): step 1/1. Functionally, catalyzes the attachment of serine to tRNA(Ser). Is also able to aminoacylate tRNA(Sec) with serine, to form the misacylated tRNA L-seryl-tRNA(Sec), which will be further converted into selenocysteinyl-tRNA(Sec). The sequence is that of Serine--tRNA ligase from Hydrogenobaculum sp. (strain Y04AAS1).